The primary structure comprises 112 residues: MSAPATTQVEILQEGDGKTFPKPGDLVTIHYTGTLENGKKFDSSRDRGKPFQCTIGVGQVIVGWDTGIPKLSVGSRAKLSIPGHEAYGDRGFPGLIPPNATLLFDVELLNVN.

Positions 1–10 (MSAPATTQVE) are enriched in polar residues. The segment at 1 to 20 (MSAPATTQVEILQEGDGKTF) is disordered. A PPIase FKBP-type domain is found at 24-112 (GDLVTIHYTG…LFDVELLNVN (89 aa)).

It belongs to the FKBP-type PPIase family. FKBP1 subfamily.

Its subcellular location is the cytoplasm. It catalyses the reaction [protein]-peptidylproline (omega=180) = [protein]-peptidylproline (omega=0). With respect to regulation, inhibited by both FK506 and rapamycin. In terms of biological role, PPIases accelerate the folding of proteins. It catalyzes the cis-trans isomerization of proline imidic peptide bonds in oligopeptides. This is FK506-binding protein 1 (FPR1) from Debaryomyces hansenii (strain ATCC 36239 / CBS 767 / BCRC 21394 / JCM 1990 / NBRC 0083 / IGC 2968) (Yeast).